The sequence spans 154 residues: AP-1 complex subunit sigma-2 (154 aa).

The protein belongs to the adaptor complexes small subunit family. Adaptor protein complex 1 (AP-1) is a heterotetramer composed of two large adaptins (gamma-type subunit and beta-type subunit), a medium adaptin (mu-type subunit) and a small adaptin (sigma-type subunit).

It is found in the golgi apparatus. The protein resides in the trans-Golgi network. The protein localises to the cytoplasmic vesicle. It localises to the clathrin-coated vesicle membrane. Subunit of clathrin-associated adaptor protein complex 1 that plays a role in protein sorting in the trans-Golgi network (TGN) and endosomes. The AP complexes mediate the recruitment of clathrin to membranes and the recognition of sorting signals within the cytosolic tails of transmembrane cargo molecules. Also involved in early steps of phagocytosis and macropinocytosis. This is AP-1 complex subunit sigma-2 (ap1s2) from Dictyostelium discoideum (Social amoeba).